A 481-amino-acid chain; its full sequence is Glutamyl-tRNA(Gln) amidotransferase subunit A (481 aa).

Residues Lys74 and Ser149 each act as charge relay system in the active site. Ser173 acts as the Acyl-ester intermediate in catalysis.

This sequence belongs to the amidase family. GatA subfamily. As to quaternary structure, heterotrimer of A, B and C subunits.

The enzyme catalyses L-glutamyl-tRNA(Gln) + L-glutamine + ATP + H2O = L-glutaminyl-tRNA(Gln) + L-glutamate + ADP + phosphate + H(+). Allows the formation of correctly charged Gln-tRNA(Gln) through the transamidation of misacylated Glu-tRNA(Gln) in organisms which lack glutaminyl-tRNA synthetase. The reaction takes place in the presence of glutamine and ATP through an activated gamma-phospho-Glu-tRNA(Gln). The sequence is that of Glutamyl-tRNA(Gln) amidotransferase subunit A from Francisella tularensis subsp. holarctica (strain FTNF002-00 / FTA).